The primary structure comprises 112 residues: Hydrogenase maturation factor HypA (112 aa).

Residue His-2 coordinates Ni(2+). The Zn(2+) site is built by Cys-72, Cys-75, Cys-88, and Cys-91.

This sequence belongs to the HypA/HybF family.

Involved in the maturation of [NiFe] hydrogenases. Required for nickel insertion into the metal center of the hydrogenase. The chain is Hydrogenase maturation factor HypA from Francisella philomiragia subsp. philomiragia (strain ATCC 25017 / CCUG 19701 / FSC 153 / O#319-036).